A 588-amino-acid chain; its full sequence is Synaptotagmin-3 (588 aa).

The Vesicular segment spans residues 1–54 (MSGDYEDDLCRRALILVSDLCARIRDADTNDRCQEFNELRIRGYPRGPDADISV). Positions 10 to 34 (CRRALILVSDLCARIRDADTNDRCQ) are cysteine motif. Residues 55 to 75 (SLLSVIVTFCGIVLLGVSLFV) traverse the membrane as a helical segment. Over 76-588 (SWKLCWVPWR…KGLSEKENSE (513 aa)) the chain is Cytoplasmic. 3 disordered regions span residues 129–161 (GGPHHHAHPAHHPPFAELLEPGGLGGSEPPEPS), 183–222 (PSQTSPELPSEGGTGSGLLLLPPSGGGLPSAQSHQQVTSL), and 238–257 (QTLTTQADPSSEERPPALPL). The span at 183–205 (PSQTSPELPSEGGTGSGLLLLPP) shows a compositional bias: low complexity. Polar residues predominate over residues 213 to 222 (AQSHQQVTSL). Residue R286 is modified to Omega-N-methylarginine. C2 domains are found at residues 297-418 (PCGR…PLWR) and 429-563 (DLGE…EHWH). Ca(2+) contacts are provided by D328, D334, D386, F387, D388, S391, D394, D460, D466, D520, and D522.

It belongs to the synaptotagmin family. In terms of assembly, homodimer; disulfide-linked via the cysteine motif. Can also form heterodimers with SYT6, SYT9 and SYT10. It depends on Ca(2+) as a cofactor. As to expression, brain, various endocrine tissues and hormone-secreting clonal cells.

The protein resides in the cell membrane. It is found in the cytoplasmic vesicle. It localises to the secretory vesicle membrane. In terms of biological role, ca(2+) sensor involved in Ca(2+)-dependent exocytosis of secretory vesicles through Ca(2+) and phospholipid binding to the C2 domain. Ca(2+) induces binding of the C2-domains to phospholipid membranes and to assembled SNARE-complexes; both actions contribute to triggering exocytosis. Plays a role in dendrite formation by melanocytes. In Rattus norvegicus (Rat), this protein is Synaptotagmin-3 (Syt3).